We begin with the raw amino-acid sequence, 469 residues long: Adenosylhomocysteinase (469 aa).

Substrate-binding residues include T63, D139, and E164. 165-167 (TTT) contributes to the NAD(+) binding site. K194 and D198 together coordinate substrate. Residues N199, 228–233 (GYGDVG), E251, N300, 321–323 (IGH), and N375 each bind NAD(+).

Belongs to the adenosylhomocysteinase family. The cofactor is NAD(+).

Its subcellular location is the cytoplasm. The enzyme catalyses S-adenosyl-L-homocysteine + H2O = L-homocysteine + adenosine. Its pathway is amino-acid biosynthesis; L-homocysteine biosynthesis; L-homocysteine from S-adenosyl-L-homocysteine: step 1/1. May play a key role in the regulation of the intracellular concentration of adenosylhomocysteine. This Pseudomonas putida (strain ATCC 700007 / DSM 6899 / JCM 31910 / BCRC 17059 / LMG 24140 / F1) protein is Adenosylhomocysteinase.